A 157-amino-acid polypeptide reads, in one-letter code: SsrA-binding protein (157 aa).

The protein belongs to the SmpB family.

The protein resides in the cytoplasm. Its function is as follows. Required for rescue of stalled ribosomes mediated by trans-translation. Binds to transfer-messenger RNA (tmRNA), required for stable association of tmRNA with ribosomes. tmRNA and SmpB together mimic tRNA shape, replacing the anticodon stem-loop with SmpB. tmRNA is encoded by the ssrA gene; the 2 termini fold to resemble tRNA(Ala) and it encodes a 'tag peptide', a short internal open reading frame. During trans-translation Ala-aminoacylated tmRNA acts like a tRNA, entering the A-site of stalled ribosomes, displacing the stalled mRNA. The ribosome then switches to translate the ORF on the tmRNA; the nascent peptide is terminated with the 'tag peptide' encoded by the tmRNA and targeted for degradation. The ribosome is freed to recommence translation, which seems to be the essential function of trans-translation. The sequence is that of SsrA-binding protein from Methylobacterium nodulans (strain LMG 21967 / CNCM I-2342 / ORS 2060).